The sequence spans 193 residues: dCTP deaminase (193 aa).

DCTP contacts are provided by residues 110-115 (RSSLAR), D128, 136-138 (VLE), Y171, K178, and Q182. The Proton donor/acceptor role is filled by E138. The disordered stretch occupies residues 169-193 (RPYNSRQDAKYRDQQGAVASRIDKD).

It belongs to the dCTP deaminase family. In terms of assembly, homotrimer.

It carries out the reaction dCTP + H2O + H(+) = dUTP + NH4(+). Its pathway is pyrimidine metabolism; dUMP biosynthesis; dUMP from dCTP (dUTP route): step 1/2. Catalyzes the deamination of dCTP to dUTP. In Serratia proteamaculans (strain 568), this protein is dCTP deaminase.